Reading from the N-terminus, the 145-residue chain is NADH-quinone oxidoreductase subunit A (145 aa).

3 helical membrane-spanning segments follow: residues 14–34 (FAVFLIVSIGLCCLMLAGAWF), 66–86 (FYLVAMFFVIFDVEALYLYAW), and 96–116 (VGFVEAAIFILVLLAGLFYLV).

This sequence belongs to the complex I subunit 3 family. NDH-1 is composed of 13 different subunits. Subunits NuoA, H, J, K, L, M, N constitute the membrane sector of the complex.

The protein resides in the cell inner membrane. It catalyses the reaction a quinone + NADH + 5 H(+)(in) = a quinol + NAD(+) + 4 H(+)(out). In terms of biological role, NDH-1 shuttles electrons from NADH, via FMN and iron-sulfur (Fe-S) centers, to quinones in the respiratory chain. The immediate electron acceptor for the enzyme in this species is believed to be ubiquinone. Couples the redox reaction to proton translocation (for every two electrons transferred, four hydrogen ions are translocated across the cytoplasmic membrane), and thus conserves the redox energy in a proton gradient. This Erwinia tasmaniensis (strain DSM 17950 / CFBP 7177 / CIP 109463 / NCPPB 4357 / Et1/99) protein is NADH-quinone oxidoreductase subunit A.